The primary structure comprises 330 residues: Aspartate--ammonia ligase (330 aa).

Belongs to the class-II aminoacyl-tRNA synthetase family. AsnA subfamily.

The protein localises to the cytoplasm. It carries out the reaction L-aspartate + NH4(+) + ATP = L-asparagine + AMP + diphosphate + H(+). It functions in the pathway amino-acid biosynthesis; L-asparagine biosynthesis; L-asparagine from L-aspartate (ammonia route): step 1/1. This chain is Aspartate--ammonia ligase, found in Klebsiella pneumoniae subsp. pneumoniae (strain ATCC 700721 / MGH 78578).